We begin with the raw amino-acid sequence, 136 residues long: Large ribosomal subunit protein bL20 (136 aa).

The protein belongs to the bacterial ribosomal protein bL20 family.

Functionally, binds directly to 23S ribosomal RNA and is necessary for the in vitro assembly process of the 50S ribosomal subunit. It is not involved in the protein synthesizing functions of that subunit. The sequence is that of Large ribosomal subunit protein bL20 from Tropheryma whipplei (strain Twist) (Whipple's bacillus).